We begin with the raw amino-acid sequence, 227 residues long: Probable septum site-determining protein MinC (227 aa).

The protein belongs to the MinC family. As to quaternary structure, interacts with MinD and FtsZ.

Cell division inhibitor that blocks the formation of polar Z ring septums. Rapidly oscillates between the poles of the cell to destabilize FtsZ filaments that have formed before they mature into polar Z rings. Prevents FtsZ polymerization. The protein is Probable septum site-determining protein MinC of Geobacillus kaustophilus (strain HTA426).